Here is a 275-residue protein sequence, read N- to C-terminus: Phospholipid scramblase (275 aa).

A helical transmembrane segment spans residues 256-272; the sequence is WKMMLLAFALFLDYMYY.

It belongs to the phospholipid scramblase family. Forms homooligomers in the presence of calcium. The cofactor is Ca(2+). Requires Mg(2+) as cofactor.

It localises to the membrane. Its subcellular location is the cell membrane. The catalysed reaction is a 1,2-diacyl-sn-glycero-3-phosphoethanolamine(in) = a 1,2-diacyl-sn-glycero-3-phosphoethanolamine(out). Its function is as follows. Catalyzes calcium-induced ATP-independent rapid bidirectional and non-specific movement of phospholipids (lipid scrambling or lipid flip-flop) between the inner and outer leaflet of the plasma membrane resulting in collapse of the phospholipid asymmetry. Preferentially, mediates calcium-dependent phosphatidylethanolamine externalization. During the liver stage, plays a role in the interaction with, and thus invasion of, host hepatocytes. Dispensable for host erythrocyte invasion and asexual parasite development. The polypeptide is Phospholipid scramblase (Plasmodium falciparum (isolate 3D7)).